The chain runs to 472 residues: DEAD-box ATP-dependent RNA helicase 58, chloroplastic (472 aa).

A chloroplast-targeting transit peptide spans 1-54; sequence MASQLLNVPHLAFFPKISYASVFSTLKPSFFHSTSTRRALKSSPSSRIINLQAV. A Q motif motif is present at residues 76–104; it reads RQICQGFVPEHILHRMEEIGFVFPTDIQR. The region spanning 107-286 is the Helicase ATP-binding domain; sequence LPTLFTGRDC…DCIQQKWTKR (180 aa). Residue 120 to 127 coordinates ATP; it reads AQTGSGKT. The DEAD box motif lies at 231 to 234; the sequence is DEVD. One can recognise a Helicase C-terminal domain in the interval 314 to 472; sequence NKHQVLLALL…LMFSCEEMML (159 aa).

Belongs to the DEAD box helicase family.

It localises to the plastid. It is found in the chloroplast. The catalysed reaction is ATP + H2O = ADP + phosphate + H(+). This chain is DEAD-box ATP-dependent RNA helicase 58, chloroplastic (RH58), found in Arabidopsis thaliana (Mouse-ear cress).